We begin with the raw amino-acid sequence, 145 residues long: Enhancer of mRNA-decapping protein 2 (145 aa).

Disordered regions lie at residues 1-74 (MGSE…DKAT) and 89-115 (PKKK…IDSK). The segment covering 29-42 (TKTQILVPPTQSLP) has biased composition (polar residues). Basic and acidic residues predominate over residues 55–73 (QRREPRERTSKTGHEDDKA). Residues 89–102 (PKKKSCKYKKKKTR) show a composition bias toward basic residues.

Belongs to the EDC family.

It localises to the cytoplasm. The protein resides in the nucleus. Functionally, mRNA-binding protein which stimulates mRNA decapping by DCP1 and DCP2. The polypeptide is Enhancer of mRNA-decapping protein 2 (EDC2) (Saccharomyces cerevisiae (strain ATCC 204508 / S288c) (Baker's yeast)).